The chain runs to 375 residues: 4-hydroxy-3-methylbut-2-en-1-yl diphosphate synthase (flavodoxin) (375 aa).

4 residues coordinate [4Fe-4S] cluster: Cys-270, Cys-273, Cys-305, and Glu-312.

Belongs to the IspG family. [4Fe-4S] cluster is required as a cofactor.

The catalysed reaction is (2E)-4-hydroxy-3-methylbut-2-enyl diphosphate + oxidized [flavodoxin] + H2O + 2 H(+) = 2-C-methyl-D-erythritol 2,4-cyclic diphosphate + reduced [flavodoxin]. It functions in the pathway isoprenoid biosynthesis; isopentenyl diphosphate biosynthesis via DXP pathway; isopentenyl diphosphate from 1-deoxy-D-xylulose 5-phosphate: step 5/6. In terms of biological role, converts 2C-methyl-D-erythritol 2,4-cyclodiphosphate (ME-2,4cPP) into 1-hydroxy-2-methyl-2-(E)-butenyl 4-diphosphate. The chain is 4-hydroxy-3-methylbut-2-en-1-yl diphosphate synthase (flavodoxin) from Shigella flexneri serotype 5b (strain 8401).